Here is a 200-residue protein sequence, read N- to C-terminus: Fibrillarin-like rRNA/tRNA 2'-O-methyltransferase (200 aa).

S-adenosyl-L-methionine is bound by residues 62-63 (TT), 78-79 (EF), 103-104 (DA), and 123-126 (DVAQ).

The protein belongs to the methyltransferase superfamily. Fibrillarin family. Interacts with nop5. Component of box C/D small ribonucleoprotein (sRNP) particles that contain rpl7ae, FlpA and nop5, plus a guide RNA.

Involved in pre-rRNA and tRNA processing. Utilizes the methyl donor S-adenosyl-L-methionine to catalyze the site-specific 2'-hydroxyl methylation of ribose moieties in rRNA and tRNA. Site specificity is provided by a guide RNA that base pairs with the substrate. Methylation occurs at a characteristic distance from the sequence involved in base pairing with the guide RNA. This is Fibrillarin-like rRNA/tRNA 2'-O-methyltransferase from Methanoculleus marisnigri (strain ATCC 35101 / DSM 1498 / JR1).